The chain runs to 371 residues: Cysteine proteinase EP-B 1 (371 aa).

An N-terminal signal peptide occupies residues 1-28 (MGLLSKKLLVASMVAAVLAVAAVELCSA). Positions 29-133 (IPMEDKDLES…FMYAALNVSD (105 aa)) are cleaved as a propeptide — activation peptide. Residue N130 is glycosylated (N-linked (GlcNAc...) asparagine). Cystine bridges form between C155/C197, C189/C230, and C291/C343. C158 is an active-site residue. Catalysis depends on residues H297 and N318.

The protein belongs to the peptidase C1 family.

The polypeptide is Cysteine proteinase EP-B 1 (Hordeum vulgare (Barley)).